Reading from the N-terminus, the 160-residue chain is SsrA-binding protein (160 aa).

This sequence belongs to the SmpB family.

The protein localises to the cytoplasm. In terms of biological role, required for rescue of stalled ribosomes mediated by trans-translation. Binds to transfer-messenger RNA (tmRNA), required for stable association of tmRNA with ribosomes. tmRNA and SmpB together mimic tRNA shape, replacing the anticodon stem-loop with SmpB. tmRNA is encoded by the ssrA gene; the 2 termini fold to resemble tRNA(Ala) and it encodes a 'tag peptide', a short internal open reading frame. During trans-translation Ala-aminoacylated tmRNA acts like a tRNA, entering the A-site of stalled ribosomes, displacing the stalled mRNA. The ribosome then switches to translate the ORF on the tmRNA; the nascent peptide is terminated with the 'tag peptide' encoded by the tmRNA and targeted for degradation. The ribosome is freed to recommence translation, which seems to be the essential function of trans-translation. This Zymomonas mobilis subsp. mobilis (strain ATCC 31821 / ZM4 / CP4) protein is SsrA-binding protein.